The chain runs to 169 residues: Cell division inhibitor SulA (169 aa).

Polar residues predominate over residues 1–15 (MFTSAHANRSAQASA). The segment at 1–22 (MFTSAHANRSAQASASAGHYAH) is disordered. Residues 106 to 112 (ALRTGNY) form a ftsZ binding region. The lon protease binding stretch occupies residues 162 to 169 (KIHSNLYH).

This sequence belongs to the SulA family. As to quaternary structure, interacts with FtsZ. Post-translationally, is rapidly cleaved and degraded by the Lon protease once DNA damage is repaired.

Functionally, component of the SOS system and an inhibitor of cell division. Accumulation of SulA causes rapid cessation of cell division and the appearance of long, non-septate filaments. In the presence of GTP, binds a polymerization-competent form of FtsZ in a 1:1 ratio, thus inhibiting FtsZ polymerization and therefore preventing it from participating in the assembly of the Z ring. This mechanism prevents the premature segregation of damaged DNA to daughter cells during cell division. In Klebsiella pneumoniae (strain 342), this protein is Cell division inhibitor SulA.